The sequence spans 121 residues: Cytochrome B5-like protein (121 aa).

A helical membrane pass occupies residues 1–21 (MIAVIGLLLGFLVSALFLIQG). The disordered stretch occupies residues 24 to 49 (RRTNDNQEKKRSSSEPVEDVVRPKSY). Residues 26–36 (TNDNQEKKRSS) are compositionally biased toward basic and acidic residues. Residues 46-121 (PKSYSKSEVA…IEDFYIGELH (76 aa)) form the Cytochrome b5 heme-binding domain. Heme is bound by residues H81 and H104.

This sequence belongs to the cytochrome b5 family.

It localises to the membrane. In Arabidopsis thaliana (Mouse-ear cress), this protein is Cytochrome B5-like protein.